The following is a 996-amino-acid chain: Sarcoplasmic/endoplasmic reticulum calcium ATPase 1 (996 aa).

The Cytoplasmic portion of the chain corresponds to 1–48 (MENAHTKSPAECLSYFGVNEHTGLSPDQFKKNLDKFGYNELPAEEGKS). A helical transmembrane segment spans residues 49-69 (IWDLIVEQFEDLLVRILLLAA). Residues 70 to 89 (CISFVLAWFEEGEETITAFV) lie on the Lumenal side of the membrane. Residues 90–110 (EPFVILLILIANAIVGVWQER) form a helical membrane-spanning segment. Topologically, residues 111-253 (NAEDAIEALK…QEKTPLQAKL (143 aa)) are cytoplasmic. Residues 254–273 (DEFGEQLSKVISLICVAVWA) traverse the membrane as a helical segment. The Lumenal segment spans residues 274–295 (INIGHFNDPVHGGSWIRGAVYY). A helical membrane pass occupies residues 296–313 (FKIAVALAVAAIPEGLPA). V304, A305, I307, and E309 together coordinate Ca(2+). Topologically, residues 314–754 (VITTCLALGT…EEGRAIYNNM (441 aa)) are cytoplasmic. D351 serves as the catalytic 4-aspartylphosphate intermediate. Residues D351 and T353 each coordinate Mg(2+). Residues T353, E442, R489, K512, R557, T622, G623, D624, R675, and K681 each coordinate ATP. D700 contributes to the Mg(2+) binding site. Position 703 (N703) interacts with ATP. Residues 755-774 (KQFIRYLISSNVGEVVCIFL) form a helical membrane-spanning segment. N765 and E768 together coordinate Ca(2+). Residues 775–784 (TAALGLPEAL) lie on the Lumenal side of the membrane. Residues 785–805 (IPVQLLWVNLVTDGLPATALG) form a helical membrane-spanning segment. The segment at 785 to 805 (IPVQLLWVNLVTDGLPATALG) is interaction with PLN. 3 residues coordinate Ca(2+): N793, T796, and D797. Residues 806-825 (FNPPDLDIMGKPPRSPKEPL) are Cytoplasmic-facing. A helical membrane pass occupies residues 826–848 (ISGWLFFRYMAIGGYVGAATVGG). Over 849 to 894 (AAWWFLYDSTGPAVTYYQLSHFMQCHNHNEDFTGVDCDIFEASPPM) the chain is Lumenal. C873 and C885 are disulfide-bonded. A helical transmembrane segment spans residues 895 to 914 (TMALSVLVTIEMCNALNSLS). Residue E905 coordinates Ca(2+). Over 915-927 (ENQSLIRMPPWSN) the chain is Cytoplasmic. A helical transmembrane segment spans residues 928-946 (LWLMAAMTLSMSLHFMIIY). Residues 929–940 (WLMAAMTLSMSL) form an interaction with PLN region. Over 947–961 (VDPLPMIFKLTHLTF) the chain is Lumenal. A helical membrane pass occupies residues 962-982 (DQWLMVFKLSFPVILIDEVLK). The Cytoplasmic segment spans residues 983-996 (FFARNYIETGKEVK).

The protein belongs to the cation transport ATPase (P-type) (TC 3.A.3) family. Type IIA subfamily. As to quaternary structure, interacts with sarcolipin (SLN). Interacts with phospholamban (PLN). Interacts with myoregulin (MRLN). Interacts with DWORF. Mg(2+) serves as cofactor.

It localises to the endoplasmic reticulum membrane. The protein localises to the sarcoplasmic reticulum membrane. The catalysed reaction is Ca(2+)(in) + ATP + H2O = Ca(2+)(out) + ADP + phosphate + H(+). Inhibited by sarcolipin (SLN) and myoregulin (MRLN). Also shown to be inhibited by phospholamban (PLN) in vitro. Enhanced by DWORF; DWORF increases activity by displacing sarcolipin (SLN), phospholamban (PLN) and myoregulin (MRLN). Functionally, key regulator of striated muscle performance by acting as the major Ca(2+) ATPase responsible for the reuptake of cytosolic Ca(2+) into the sarcoplasmic reticulum. Catalyzes the hydrolysis of ATP coupled with the translocation of calcium from the cytosol to the sarcoplasmic reticulum lumen. Contributes to calcium sequestration involved in muscular excitation/contraction. The protein is Sarcoplasmic/endoplasmic reticulum calcium ATPase 1 (atp2a1) of Makaira nigricans (Atlantic blue marlin).